Consider the following 491-residue polypeptide: Cytochrome P450 monooxygenase olcB (491 aa).

The chain crosses the membrane as a helical span at residues 5–27 (LLLSLSVCLLYVFITAFWNLYIH). Residue Cys435 participates in heme binding.

Belongs to the cytochrome P450 family. It depends on heme as a cofactor.

It localises to the membrane. It participates in secondary metabolite biosynthesis; terpenoid biosynthesis. In terms of biological role, cytochrome P450 monooxygenase; part of the gene cluster that mediates the biosynthesis of 15-deoxyoxalicine B. The first step of the pathway is the synthesis of nicotinyl-CoA from nicotinic acid by the nicotinic acid-CoA ligase olcI. Nicotinyl-CoA is then a substrate of polyketide synthase olcA to produce 4-hydroxy-6-(3-pyridinyl)-2H-pyran-2-one (HPPO) which is further prenylated by the polyprenyl transferase olcH to yield geranylgeranyl-HPPO. Geranylgeranyl pyrophosphate is provided by the cluster-specific geranylgeranyl pyrophosphate synthase olcC. The FAD-dependent monooxygenase olcE catalyzes the epoxidation of geranylgeranyl-HPPO and the terpene cyclase olcD catalyzes the cyclization of the terpenoid component, resulting in the formation of the tricyclic terpene moiety seen in predecaturin E. The cytochrome P450 monooxygenase then catalyzes the allylic oxidation of predecaturin E, which is followed by spirocylization with concomitant loss of one molecule of water to form decaturin E. Decaturin E is the substrate of the cytochrome P450 monooxygenase olcJ which hydroxylates it at the C-29 position to form decaturin F. The short-chain dehydrogenase/reductase olcF may catalyze the oxidation of decaturin F to generate the 29-hydroxyl-27-one intermediate, and subsequent hemiacetal formation probably leads to the formation of decaturin C. The dioxygenase olcK may be a peroxisomal enzyme that catalyzes the hydroxylation of decaturin C into decaturin A once decaturin C is shuttled into the peroxisome by the MFS transporter olcL. Finally the cytochrome P450 monooxygenase olcB catalyzes the oxidative rearrangement to yield 15-deoxyoxalicine B. In the absence of olcJ, decaturin E may be shunted to a pathway in which it is oxidized to a ketone, possibly by olcF, to form decaturin D, which undergoes further allylic oxidation to yield decaturin G. Moreover, in the absence of oclK or oclL, oclB can convert decaturin C into 15-deoxyoxalicine A. This Penicillium canescens protein is Cytochrome P450 monooxygenase olcB.